Consider the following 419-residue polypeptide: 4-hydroxyphenylpyruvate dioxygenase (419 aa).

VOC domains lie at 41–187 (GYHH…FIQR) and 218–376 (AIDH…LFTK). Positions 221, 304, and 387 each coordinate Fe cation.

This sequence belongs to the 4HPPD family. Fe cation is required as a cofactor.

It catalyses the reaction 3-(4-hydroxyphenyl)pyruvate + O2 = homogentisate + CO2. The protein operates within amino-acid degradation; L-phenylalanine degradation; acetoacetate and fumarate from L-phenylalanine: step 3/6. This is 4-hydroxyphenylpyruvate dioxygenase (HPPD) from Zymoseptoria tritici (Speckled leaf blotch fungus).